A 318-amino-acid chain; its full sequence is Probable endolytic peptidoglycan transglycosylase RlpA (318 aa).

Residues 1 to 21 (MMDKRVVAVAAVLWNVQMLFA) form the signal peptide. Residues 121–191 (DPNAHASQQR…GVANTTDVPA (71 aa)) are disordered. A compositionally biased stretch (polar residues) spans 125 to 137 (HASQQRNDRQTSP).

This sequence belongs to the RlpA family.

Lytic transglycosylase with a strong preference for naked glycan strands that lack stem peptides. The polypeptide is Probable endolytic peptidoglycan transglycosylase RlpA (Treponema pallidum (strain Nichols)).